The following is a 669-amino-acid chain: Histone-lysine N-methyltransferase, H3 lysine-9 specific SUVH3 (669 aa).

Disordered stretches follow at residues 56–127 (YSSF…EKKT) and 270–290 (ESLI…ASDQ). Polar residues-rich tracts occupy residues 65-82 (QQPT…NTPI) and 93-107 (RTPT…SSGT). Positions 108–120 (KRGVGRPKGTTSV) form a DNA-binding region, a.T hook. The region spanning 208 to 355 (GTVPGIEVGD…CNTFKYKLVR (148 aa)) is the YDG domain. The Pre-SET domain occupies 430–491 (IGCSCSGSCS…SCKNRVIQTG (62 aa)). Residues Cys432, Cys434, Cys438, Cys445, Cys447, Cys473, Cys477, Cys479, and Cys483 each coordinate Zn(2+). Positions 494-638 (SRLEVFKTRN…PMAELTYDYG (145 aa)) constitute an SET domain. Residues 504–506 (RGW), Asp540, Tyr542, Arg592, and 595–596 (NH) each bind S-adenosyl-L-methionine. Residues Cys598, Cys657, Cys659, and Cys664 each coordinate Zn(2+). The Post-SET domain maps to 653-669 (GQRTCLCGSEQCRGSFG).

It belongs to the class V-like SAM-binding methyltransferase superfamily. Histone-lysine methyltransferase family. Suvar3-9 subfamily. Expressed in leaves stems and flowers.

It localises to the nucleus. It is found in the chromosome. The protein localises to the centromere. The enzyme catalyses L-lysyl(9)-[histone H3] + S-adenosyl-L-methionine = N(6)-methyl-L-lysyl(9)-[histone H3] + S-adenosyl-L-homocysteine + H(+). In terms of biological role, histone methyltransferase. Methylates 'Lys-9' of histone H3. H3 'Lys-9' methylation represents a specific tag for epigenetic transcriptional repression. The sequence is that of Histone-lysine N-methyltransferase, H3 lysine-9 specific SUVH3 (SUVH3) from Arabidopsis thaliana (Mouse-ear cress).